Here is a 472-residue protein sequence, read N- to C-terminus: 3-isopropylmalate dehydratase large subunit (472 aa).

Residues C346, C406, and C409 each contribute to the [4Fe-4S] cluster site.

This sequence belongs to the aconitase/IPM isomerase family. LeuC type 1 subfamily. As to quaternary structure, heterodimer of LeuC and LeuD. Requires [4Fe-4S] cluster as cofactor.

It catalyses the reaction (2R,3S)-3-isopropylmalate = (2S)-2-isopropylmalate. Its pathway is amino-acid biosynthesis; L-leucine biosynthesis; L-leucine from 3-methyl-2-oxobutanoate: step 2/4. Catalyzes the isomerization between 2-isopropylmalate and 3-isopropylmalate, via the formation of 2-isopropylmaleate. The protein is 3-isopropylmalate dehydratase large subunit of Thermus thermophilus (strain ATCC BAA-163 / DSM 7039 / HB27).